The primary structure comprises 165 residues: Protein eva-1 homolog B (165 aa).

Residues 29 to 49 (GLYFVLGVCFGLLLTLCLLVI) form a helical membrane-spanning segment. Disordered regions lie at residues 57–109 (PRPR…GPLN) and 143–165 (LLGT…MHYY). The segment covering 74-84 (EPEDDDEDEED) has biased composition (acidic residues). A phosphothreonine mark is found at Thr-85, Thr-148, and Thr-158.

The protein belongs to the EVA1 family.

The protein localises to the membrane. The chain is Protein eva-1 homolog B (EVA1B) from Homo sapiens (Human).